A 455-amino-acid chain; its full sequence is UDP-N-acetylmuramoylalanine--D-glutamate ligase (455 aa).

118-124 (GSNAKST) provides a ligand contact to ATP.

This sequence belongs to the MurCDEF family.

The protein localises to the cytoplasm. The enzyme catalyses UDP-N-acetyl-alpha-D-muramoyl-L-alanine + D-glutamate + ATP = UDP-N-acetyl-alpha-D-muramoyl-L-alanyl-D-glutamate + ADP + phosphate + H(+). The protein operates within cell wall biogenesis; peptidoglycan biosynthesis. Its function is as follows. Cell wall formation. Catalyzes the addition of glutamate to the nucleotide precursor UDP-N-acetylmuramoyl-L-alanine (UMA). The polypeptide is UDP-N-acetylmuramoylalanine--D-glutamate ligase (Chromohalobacter salexigens (strain ATCC BAA-138 / DSM 3043 / CIP 106854 / NCIMB 13768 / 1H11)).